A 382-amino-acid polypeptide reads, in one-letter code: Lipoyl synthase, mitochondrial (382 aa).

A mitochondrion-targeting transit peptide spans 1-30; that stretch reads MHGRRHLAASLARALTYAPSRSISSTPSLL. The segment covering 25-34 has biased composition (polar residues); that stretch reads STPSLLQTLD. The disordered stretch occupies residues 25 to 46; that stretch reads STPSLLQTLDPSTPSPAAAPPT. The [4Fe-4S] cluster site is built by Cys112, Cys117, Cys123, Cys143, Cys147, Cys150, and Ser359. In terms of domain architecture, Radical SAM core spans 128–348; it reads ETGTATATIM…RSLGVDMGFR (221 aa).

Belongs to the radical SAM superfamily. Lipoyl synthase family. The cofactor is [4Fe-4S] cluster.

It localises to the mitochondrion. The catalysed reaction is [[Fe-S] cluster scaffold protein carrying a second [4Fe-4S](2+) cluster] + N(6)-octanoyl-L-lysyl-[protein] + 2 oxidized [2Fe-2S]-[ferredoxin] + 2 S-adenosyl-L-methionine + 4 H(+) = [[Fe-S] cluster scaffold protein] + N(6)-[(R)-dihydrolipoyl]-L-lysyl-[protein] + 4 Fe(3+) + 2 hydrogen sulfide + 2 5'-deoxyadenosine + 2 L-methionine + 2 reduced [2Fe-2S]-[ferredoxin]. It functions in the pathway protein modification; protein lipoylation via endogenous pathway; protein N(6)-(lipoyl)lysine from octanoyl-[acyl-carrier-protein]: step 2/2. Its function is as follows. Catalyzes the radical-mediated insertion of two sulfur atoms into the C-6 and C-8 positions of the octanoyl moiety bound to the lipoyl domains of lipoate-dependent enzymes, thereby converting the octanoylated domains into lipoylated derivatives. This Oryza sativa subsp. japonica (Rice) protein is Lipoyl synthase, mitochondrial.